We begin with the raw amino-acid sequence, 155 residues long: Small ribosomal subunit protein uS7cz/uS7cy (155 aa).

The protein belongs to the universal ribosomal protein uS7 family. Part of the 30S ribosomal subunit.

The protein localises to the plastid. It is found in the chloroplast. One of the primary rRNA binding proteins, it binds directly to 16S rRNA where it nucleates assembly of the head domain of the 30S subunit. In Chloranthus spicatus (Chulantree), this protein is Small ribosomal subunit protein uS7cz/uS7cy (rps7-A).